The sequence spans 325 residues: DNA-directed RNA polymerase subunit alpha (325 aa).

Residues 1-231 form an alpha N-terminal domain (alpha-NTD) region; sequence MQNSLLKPRI…DQLNVFAALE (231 aa). Residues 246-325 form an alpha C-terminal domain (alpha-CTD) region; it reads VDPILLRPVD…ENWPPAGLEK (80 aa).

It belongs to the RNA polymerase alpha chain family. As to quaternary structure, homodimer. The RNAP catalytic core consists of 2 alpha, 1 beta, 1 beta' and 1 omega subunit. When a sigma factor is associated with the core the holoenzyme is formed, which can initiate transcription.

It carries out the reaction RNA(n) + a ribonucleoside 5'-triphosphate = RNA(n+1) + diphosphate. DNA-dependent RNA polymerase catalyzes the transcription of DNA into RNA using the four ribonucleoside triphosphates as substrates. The protein is DNA-directed RNA polymerase subunit alpha of Herminiimonas arsenicoxydans.